We begin with the raw amino-acid sequence, 90 residues long: Probable Fe(2+)-trafficking protein (90 aa).

The protein belongs to the Fe(2+)-trafficking protein family.

In terms of biological role, could be a mediator in iron transactions between iron acquisition and iron-requiring processes, such as synthesis and/or repair of Fe-S clusters in biosynthetic enzymes. The chain is Probable Fe(2+)-trafficking protein from Vibrio vulnificus (strain CMCP6).